The chain runs to 366 residues: Chalcone synthase B (366 aa).

Cys-172 is a catalytic residue.

Belongs to the thiolase-like superfamily. Chalcone/stilbene synthases family.

The enzyme catalyses (E)-4-coumaroyl-CoA + 3 malonyl-CoA + 3 H(+) = 2',4,4',6'-tetrahydroxychalcone + 3 CO2 + 4 CoA. The protein operates within secondary metabolite biosynthesis; flavonoid biosynthesis. Its function is as follows. The primary product of this enzyme is 4,2',4',6'-tetrahydroxychalcone (also termed naringenin-chalcone or chalcone) which can under specific conditions spontaneously isomerize into naringenin. The sequence is that of Chalcone synthase B (CHSB) from Ipomoea trifida (Morning glory).